We begin with the raw amino-acid sequence, 229 residues long: 3-beta-hydroxysteroid-Delta(8),Delta(7)-isomerase (229 aa).

4 helical membrane passes run 30-50 (WYIVTVLFTVFGALVVTMWLL), 67-87 (VCWFAVCAFVHLVIEGWFVLY), 119-139 (IICMESITVVLWGPLSLWAVI), and 186-206 (FWFYFFFMNVLWLVIPGVLFF). The EXPERA domain occupies 62 to 205 (WRRLSVCWFA…LWLVIPGVLF (144 aa)).

It belongs to the EBP family. As to expression, highly expressed in liver, bowel, adrenal gland, testis, ovary, and uterus and less expressed in brain, cerebellum, skeletal muscle, and heart.

It is found in the endoplasmic reticulum membrane. The protein localises to the nucleus envelope. The protein resides in the cytoplasmic vesicle. It carries out the reaction lathosterol = 5alpha-cholest-8-en-3beta-ol. The catalysed reaction is zymosterol = 5alpha-cholesta-7,24-dien-3beta-ol. The enzyme catalyses 5,6alpha-epoxy-5alpha-cholestan-3beta-ol + H2O = 5alpha-cholestane-3beta,5,6beta-triol. It catalyses the reaction 5,6beta-epoxy-5beta-cholestan-3beta-ol + H2O = 5alpha-cholestane-3beta,5,6beta-triol. It functions in the pathway steroid biosynthesis; cholesterol biosynthesis. Its function is as follows. Isomerase that catalyzes the conversion of Delta(8)-sterols to their corresponding Delta(7)-isomers. Component of the microsomal antiestrogen binding site (AEBS), a multiproteic complex at the ER membrane that consists of an association between EBP and 7-dehydrocholesterol reductase/DHCR7. This complex is responsible for cholesterol-5,6-epoxide hydrolase (ChEH) activity, which consists in the hydration of cholesterol-5,6-epoxides (5,6-EC) into cholestane-3beta,5alpha,6beta-triol (CT). The precise role of each component of this complex has not been described yet. The polypeptide is 3-beta-hydroxysteroid-Delta(8),Delta(7)-isomerase (EBP) (Cavia porcellus (Guinea pig)).